Consider the following 227-residue polypeptide: Probable septum site-determining protein MinC (227 aa).

Belongs to the MinC family. Interacts with MinD and FtsZ.

In terms of biological role, cell division inhibitor that blocks the formation of polar Z ring septums. Rapidly oscillates between the poles of the cell to destabilize FtsZ filaments that have formed before they mature into polar Z rings. Prevents FtsZ polymerization. This Acetivibrio thermocellus (strain ATCC 27405 / DSM 1237 / JCM 9322 / NBRC 103400 / NCIMB 10682 / NRRL B-4536 / VPI 7372) (Clostridium thermocellum) protein is Probable septum site-determining protein MinC.